We begin with the raw amino-acid sequence, 486 residues long: UDP-N-acetylglucosamine pyrophosphorylase (486 aa).

The Substrate binding motif lies at 109 to 112 (MAGG). UTP-binding positions include 109–112 (MAGG), lysine 123, glutamine 199, and glycine 226. Residue asparagine 227 participates in substrate binding. Aspartate 257 is a binding site for UTP. The Substrate binding signature appears at 309 to 310 (EY). Lysine 389 provides a ligand contact to UTP. Lysine 421 serves as a coordination point for substrate.

This sequence belongs to the UDPGP type 1 family.

The protein localises to the cytoplasm. The enzyme catalyses N-acetyl-alpha-D-glucosamine 1-phosphate + UTP + H(+) = UDP-N-acetyl-alpha-D-glucosamine + diphosphate. It participates in nucleotide-sugar biosynthesis; UDP-N-acetyl-alpha-D-glucosamine biosynthesis; UDP-N-acetyl-alpha-D-glucosamine from N-acetyl-alpha-D-glucosamine 1-phosphate: step 1/1. This is UDP-N-acetylglucosamine pyrophosphorylase (UAP1) from Candida albicans (Yeast).